The following is a 1339-amino-acid chain: DNA-directed RNA polymerase subunit beta'' (1339 aa).

Residues cysteine 226, cysteine 299, cysteine 306, and cysteine 309 each coordinate Zn(2+).

The protein belongs to the RNA polymerase beta' chain family. RpoC2 subfamily. As to quaternary structure, in plastids the minimal PEP RNA polymerase catalytic core is composed of four subunits: alpha, beta, beta', and beta''. When a (nuclear-encoded) sigma factor is associated with the core the holoenzyme is formed, which can initiate transcription. The cofactor is Zn(2+).

The protein resides in the plastid. It localises to the chloroplast. The catalysed reaction is RNA(n) + a ribonucleoside 5'-triphosphate = RNA(n+1) + diphosphate. DNA-dependent RNA polymerase catalyzes the transcription of DNA into RNA using the four ribonucleoside triphosphates as substrates. This Cycas taitungensis (Prince sago) protein is DNA-directed RNA polymerase subunit beta''.